A 221-amino-acid chain; its full sequence is Ribonuclease T (221 aa).

Residues 21 to 195 (VVVDVETAGF…YDAEKTADLF (175 aa)) enclose the Exonuclease domain. The Mg(2+) site is built by Asp24, Glu26, His182, and Asp187. His182 serves as the catalytic Proton donor/acceptor.

This sequence belongs to the RNase T family. In terms of assembly, homodimer. The cofactor is Mg(2+).

Trims short 3' overhangs of a variety of RNA species, leaving a one or two nucleotide 3' overhang. Responsible for the end-turnover of tRNA: specifically removes the terminal AMP residue from uncharged tRNA (tRNA-C-C-A). Also appears to be involved in tRNA biosynthesis. In Marinobacter nauticus (strain ATCC 700491 / DSM 11845 / VT8) (Marinobacter aquaeolei), this protein is Ribonuclease T.